We begin with the raw amino-acid sequence, 1146 residues long: Activator of SKN7 protein 10 (1146 aa).

Residues 1 to 15 (MSDYFSSRPSQTLTP) show a composition bias toward polar residues. Disordered stretches follow at residues 1-32 (MSDY…ASSI) and 171-194 (ITDP…KVGL). Ser-344 is subject to Phosphoserine. One can recognise a PH domain in the interval 482-606 (CIKAGYFLKK…DCTLKDASST (125 aa)). Residues 553 to 575 (NNHHRQASDVHNSSTTTGGTAGA) are disordered. The segment covering 564-575 (NSSTTTGGTAGA) has biased composition (low complexity). A Phosphoserine modification is found at Ser-793. Thr-808 carries the phosphothreonine modification. Disordered stretches follow at residues 835–854 (MATS…PQSM) and 909–982 (PVNS…TAMR). Low complexity predominate over residues 912–924 (SPGSSNSESSSGG). A compositionally biased stretch (polar residues) spans 939-950 (YTQRNSEGSSPC). Ser-944 is modified (phosphoserine). Over residues 958–968 (QQQQPLQMQPL) the composition is skewed to low complexity. Ser-969 is modified (phosphoserine). Positions 969–982 (SRTSSSSVNVTAMR) are enriched in polar residues. Thr-1017 is subject to Phosphothreonine. A phosphoserine mark is found at Ser-1070, Ser-1095, and Ser-1098. Residues 1124 to 1146 (GIQEDDGDSTNNDTIKLNQSIYS) form a disordered region. Residues 1132–1146 (STNNDTIKLNQSIYS) show a composition bias toward polar residues.

Belongs to the RGC1 family. As to quaternary structure, component of the RNA polymerase II holoenzyme. Interacts with RPO21 and SSN8. In terms of processing, phosphorylated in response to various stresses. stress-induced phosphorylation is partially dependent on HOG1.

Its subcellular location is the cytoplasm. In terms of biological role, positive regulator of FPS1 glycerol channel required for the glycerol efflux. As a component of the RNA polymerase II holoenzyme, is required for SSN8 destruction in response to oxidative stress but not heat shock. Required for cell survival in response to heat shock independent of SSN8. In Saccharomyces cerevisiae (strain ATCC 204508 / S288c) (Baker's yeast), this protein is Activator of SKN7 protein 10 (ASK10).